The sequence spans 172 residues: Cytidylate kinase (172 aa).

7-15 (GPPGSGTST) serves as a coordination point for ATP.

It belongs to the cytidylate kinase family. Type 2 subfamily.

The protein localises to the cytoplasm. It carries out the reaction CMP + ATP = CDP + ADP. The catalysed reaction is dCMP + ATP = dCDP + ADP. The chain is Cytidylate kinase from Methanothrix thermoacetophila (strain DSM 6194 / JCM 14653 / NBRC 101360 / PT) (Methanosaeta thermophila).